We begin with the raw amino-acid sequence, 142 residues long: Hemoglobin subunit zeta (142 aa).

S2 is subject to N-acetylserine. Residues 2-142 (SLTKAERTMV…VSSVLTEKYR (141 aa)) form the Globin domain. A Phosphoserine modification is found at S53. H59 lines the heme b pocket. S73 is modified (phosphoserine). Position 88 (H88) interacts with heme b.

It belongs to the globin family. As to quaternary structure, heterotetramer of two zeta chains and beta-type chains.

Its function is as follows. The zeta chain is an alpha-type chain of mammalian embryonic hemoglobin. This chain is Hemoglobin subunit zeta (HBZ1), found in Equus caballus (Horse).